The following is a 59-amino-acid chain: Large ribosomal subunit protein bL33 (59 aa).

The protein belongs to the bacterial ribosomal protein bL33 family.

The chain is Large ribosomal subunit protein bL33 from Borreliella afzelii (strain PKo) (Borrelia afzelii).